The following is a 644-amino-acid chain: 3D-(3,5/4)-trihydroxycyclohexane-1,2-dione hydrolase (644 aa).

Residue E65 participates in thiamine diphosphate binding. Residues 442 to 522 (SLPGDLQRMW…INVLLFDNSG (81 aa)) are thiamine pyrophosphate binding. D493 and N520 together coordinate Mg(2+).

It belongs to the TPP enzyme family. It depends on Mg(2+) as a cofactor. Requires thiamine diphosphate as cofactor.

The enzyme catalyses 3D-3,5/4-trihydroxycyclohexane-1,2-dione + H2O = 5-deoxy-D-glucuronate + H(+). The protein operates within polyol metabolism; myo-inositol degradation into acetyl-CoA; acetyl-CoA from myo-inositol: step 3/7. Functionally, involved in the cleavage of the C1-C2 bond of 3D-(3,5/4)-trihydroxycyclohexane-1,2-dione (THcHDO) to yield 5-deoxy-glucuronate (5DG). The chain is 3D-(3,5/4)-trihydroxycyclohexane-1,2-dione hydrolase from Bacillus anthracis (strain A0248).